The sequence spans 986 residues: Regulator of telomere elongation helicase 1 homolog (986 aa).

Residues 7-326 (AGIPVHFPFE…KEMLLELEKA (320 aa)) form the Helicase ATP-binding domain. 42 to 49 (SPTGTGKT) provides a ligand contact to ATP. 4 residues coordinate [4Fe-4S] cluster: Cys148, Cys166, Cys175, and Cys211. A DEAH box motif is present at residues 254–257 (DEGH). At Thr875 the chain carries Phosphothreonine.

The protein belongs to the helicase family. RAD3/XPD subfamily.

It is found in the nucleus. The enzyme catalyses ATP + H2O = ADP + phosphate + H(+). A probable ATP-dependent DNA helicase implicated in DNA repair and the maintenance of genomic stability. Acts as an anti-recombinase to counteract toxic recombination and limit crossover during meiosis. Regulates meiotic recombination and crossover homeostasis by physically dissociating strand invasion events and thereby promotes noncrossover repair by meiotic synthesis dependent strand annealing (SDSA) as well as disassembly of D loop recombination intermediates. This Drosophila grimshawi (Hawaiian fruit fly) protein is Regulator of telomere elongation helicase 1 homolog.